The sequence spans 813 residues: LPS-assembly protein LptD (813 aa).

The interval 1 to 29 (MTEQRRSPNNRALPSPAPTSVPARARRAG) is disordered. The N-terminal stretch at 1–52 (MTEQRRSPNNRALPSPAPTSVPARARRAGGLHAGALRPLVLAMASLSAGAHA) is a signal peptide.

Belongs to the LptD family. Component of the lipopolysaccharide transport and assembly complex. Interacts with LptE and LptA.

The protein resides in the cell outer membrane. Functionally, together with LptE, is involved in the assembly of lipopolysaccharide (LPS) at the surface of the outer membrane. In Cupriavidus necator (strain ATCC 17699 / DSM 428 / KCTC 22496 / NCIMB 10442 / H16 / Stanier 337) (Ralstonia eutropha), this protein is LPS-assembly protein LptD.